We begin with the raw amino-acid sequence, 82 residues long: Opistoporin-1 (82 aa).

The N-terminal stretch at 1 to 22 is a signal peptide; the sequence is MNRKLLFVTLMVTMLVMQPSEG. The propeptide occupies 67–82; the sequence is EAGQMPFDEFMDILYE.

In terms of tissue distribution, expressed by the venom gland.

It is found in the secreted. Its subcellular location is the target cell membrane. Its function is as follows. At high concentrations, acts as a pore former in cellular membranes and causes the leakage of the cells. At submicromolar concentrations, degranulates granulocytes and has a weak hemolytic activity against human erythrocytes. Also strongly inhibits the production of superoxide anions. Has a strong antibacterial activity against Gram-negative bacteria but is less active against Gram-positive bacteria. Also has antifungal activity. This chain is Opistoporin-1, found in Opistophthalmus carinatus (African yellow leg scorpion).